The chain runs to 514 residues: Peptide chain release factor 3 (514 aa).

A tr-type G domain is found at 8-268 (KKRRTFAIIS…TFLKFAPEPH (261 aa)). GTP is bound by residues 17–24 (SHPDAGKT), 85–89 (DTPGH), and 139–142 (NKLD).

It belongs to the TRAFAC class translation factor GTPase superfamily. Classic translation factor GTPase family. PrfC subfamily.

The protein localises to the cytoplasm. Functionally, increases the formation of ribosomal termination complexes and stimulates activities of RF-1 and RF-2. It binds guanine nucleotides and has strong preference for UGA stop codons. It may interact directly with the ribosome. The stimulation of RF-1 and RF-2 is significantly reduced by GTP and GDP, but not by GMP. This Streptococcus gordonii (strain Challis / ATCC 35105 / BCRC 15272 / CH1 / DL1 / V288) protein is Peptide chain release factor 3.